Consider the following 227-residue polypeptide: Probable methylthioribulose-1-phosphate dehydratase (227 aa).

Cys87 lines the substrate pocket. Residues His105 and His107 each contribute to the Zn(2+) site. Catalysis depends on Glu129, which acts as the Proton donor/acceptor. Zn(2+) is bound at residue His185.

It belongs to the aldolase class II family. MtnB subfamily. The cofactor is Zn(2+).

It localises to the cytoplasm. It carries out the reaction 5-(methylsulfanyl)-D-ribulose 1-phosphate = 5-methylsulfanyl-2,3-dioxopentyl phosphate + H2O. It functions in the pathway amino-acid biosynthesis; L-methionine biosynthesis via salvage pathway; L-methionine from S-methyl-5-thio-alpha-D-ribose 1-phosphate: step 2/6. In terms of biological role, catalyzes the dehydration of methylthioribulose-1-phosphate (MTRu-1-P) into 2,3-diketo-5-methylthiopentyl-1-phosphate (DK-MTP-1-P). The chain is Probable methylthioribulose-1-phosphate dehydratase from Drosophila erecta (Fruit fly).